The sequence spans 339 residues: Lipoyl synthase (339 aa).

Positions 13–35 are disordered; the sequence is RPKLDAPARPRHPEKAHRPDTAI. The [4Fe-4S] cluster site is built by C68, C73, C79, C94, C98, C101, and S307. The region spanning 80–296 is the Radical SAM core domain; the sequence is WEKRHATFMI…ETTAYAKGFL (217 aa).

This sequence belongs to the radical SAM superfamily. Lipoyl synthase family. The cofactor is [4Fe-4S] cluster.

It localises to the cytoplasm. The enzyme catalyses [[Fe-S] cluster scaffold protein carrying a second [4Fe-4S](2+) cluster] + N(6)-octanoyl-L-lysyl-[protein] + 2 oxidized [2Fe-2S]-[ferredoxin] + 2 S-adenosyl-L-methionine + 4 H(+) = [[Fe-S] cluster scaffold protein] + N(6)-[(R)-dihydrolipoyl]-L-lysyl-[protein] + 4 Fe(3+) + 2 hydrogen sulfide + 2 5'-deoxyadenosine + 2 L-methionine + 2 reduced [2Fe-2S]-[ferredoxin]. It functions in the pathway protein modification; protein lipoylation via endogenous pathway; protein N(6)-(lipoyl)lysine from octanoyl-[acyl-carrier-protein]: step 2/2. Functionally, catalyzes the radical-mediated insertion of two sulfur atoms into the C-6 and C-8 positions of the octanoyl moiety bound to the lipoyl domains of lipoate-dependent enzymes, thereby converting the octanoylated domains into lipoylated derivatives. This is Lipoyl synthase from Methylorubrum extorquens (strain CM4 / NCIMB 13688) (Methylobacterium extorquens).